Here is a 354-residue protein sequence, read N- to C-terminus: Uroporphyrinogen decarboxylase (354 aa).

Residues 27-31 (RQAGR), D77, Y154, S209, and H327 each bind substrate.

This sequence belongs to the uroporphyrinogen decarboxylase family. As to quaternary structure, homodimer.

The protein resides in the cytoplasm. It catalyses the reaction uroporphyrinogen III + 4 H(+) = coproporphyrinogen III + 4 CO2. It participates in porphyrin-containing compound metabolism; protoporphyrin-IX biosynthesis; coproporphyrinogen-III from 5-aminolevulinate: step 4/4. Functionally, catalyzes the decarboxylation of four acetate groups of uroporphyrinogen-III to yield coproporphyrinogen-III. In Shewanella denitrificans (strain OS217 / ATCC BAA-1090 / DSM 15013), this protein is Uroporphyrinogen decarboxylase.